The following is a 320-amino-acid chain: Ferrochelatase (320 aa).

Residues His194 and Glu275 each contribute to the Fe cation site.

The protein belongs to the ferrochelatase family. Monomer.

Its subcellular location is the cytoplasm. It carries out the reaction heme b + 2 H(+) = protoporphyrin IX + Fe(2+). It functions in the pathway porphyrin-containing compound metabolism; protoheme biosynthesis; protoheme from protoporphyrin-IX: step 1/1. In terms of biological role, catalyzes the ferrous insertion into protoporphyrin IX. In Shigella sonnei (strain Ss046), this protein is Ferrochelatase.